The sequence spans 521 residues: Probable protein kinase UbiB (521 aa).

Positions 119–497 constitute a Protein kinase domain; sequence QFDETPIASA…QKRTNRLLQT (379 aa). ATP is bound by residues 125 to 133 and K151; that span reads IASASIAQV. D286 serves as the catalytic Proton acceptor. A helical membrane pass occupies residues 496–516; the sequence is QTIIYGGIGFVLGLLAMQLLV.

This sequence belongs to the ABC1 family. UbiB subfamily.

The protein resides in the cell inner membrane. It participates in cofactor biosynthesis; ubiquinone biosynthesis [regulation]. Its function is as follows. Is probably a protein kinase regulator of UbiI activity which is involved in aerobic coenzyme Q (ubiquinone) biosynthesis. The polypeptide is Probable protein kinase UbiB (Variovorax paradoxus (strain S110)).